The chain runs to 141 residues: VLSANDKTNVKGAWSKVGGNSGAYMGEALYRTFLSFPTTKTYFPNYDFSAGSAQIKTQGQKIADAVGLAVAHLDDMPTALSSLSDLHAHELKVDPVNFKFLCHNVLVTMAAHLGKDFTPEIHASMDKFLASVSTVLTSKYR.

The Globin domain occupies 1 to 141; that stretch reads VLSANDKTNV…VSTVLTSKYR (141 aa). The residue at position 3 (serine 3) is a Phosphoserine. Residue lysine 7 is modified to N6-succinyllysine. At threonine 8 the chain carries Phosphothreonine. The residue at position 11 (lysine 11) is an N6-succinyllysine. An N6-acetyllysine; alternate modification is found at lysine 16. Residue lysine 16 is modified to N6-succinyllysine; alternate. A Phosphotyrosine modification is found at tyrosine 24. Serine 35 carries the phosphoserine modification. Lysine 40 bears the N6-succinyllysine mark. Residue serine 49 is modified to Phosphoserine. Glutamine 58 contributes to the O2 binding site. Histidine 87 is a binding site for heme b. Threonine 108 carries the post-translational modification Phosphothreonine. Residues serine 124 and serine 131 each carry the phosphoserine modification. A phosphothreonine mark is found at threonine 134 and threonine 137. A Phosphoserine modification is found at serine 138.

It belongs to the globin family. As to quaternary structure, heterotetramer of two alpha chains and two beta chains. Red blood cells.

Functionally, involved in oxygen transport from the lung to the various peripheral tissues. In terms of biological role, hemopressin acts as an antagonist peptide of the cannabinoid receptor CNR1. Hemopressin-binding efficiently blocks cannabinoid receptor CNR1 and subsequent signaling. This chain is Hemoglobin subunit alpha (HBA), found in Didelphis virginiana (North American opossum).